Consider the following 362-residue polypeptide: UPF0283 membrane protein Arad_2632 (362 aa).

The span at 1–11 (MTKPTEDDPKG) shows a compositional bias: basic and acidic residues. Positions 1–47 (MTKPTEDDPKGISRRPAAFSLEQEASREGAHTKTTAETPRRKPQSFD) are disordered. A run of 2 helical transmembrane segments spans residues 82 to 102 (FSFG…AFGL) and 118 to 138 (LGYT…AIVV).

This sequence belongs to the UPF0283 family.

The protein localises to the cell inner membrane. This chain is UPF0283 membrane protein Arad_2632, found in Rhizobium rhizogenes (strain K84 / ATCC BAA-868) (Agrobacterium radiobacter).